Consider the following 747-residue polypeptide: MNHSPLKTALAYECFQDQDNSTLALPSDQKMKTGTSGRQRVQEQVMMTVKRQKSKSSQSSTLSHSNRGSMYDGLADNYNYGTTSRSSYYSKFQAGNGSWGYPIYNGTLKREPDNRRFSSYSQMENWSRHYPRGSCNTTGAGSDICFMQKIKASRSEPDLYCDPRGTLRKGTLGSKGQKTTQNRYSFYSTCSGQKAIKKCPVRPPSCASKQDPVYIPPISCNKDLSFGHSRASSKICSEDIECSGLTIPKAVQYLSSQDEKYQAIGAYYIQHTCFQDESAKQQVYQLGGICKLVDLLRSPNQNVQQAAAGALRNLVFRSTTNKLETRRQNGIREAVSLLRRTGNAEIQKQLTGLLWNLSSTDELKEELIADALPVLADRVIIPFSGWCDGNSNMSREVVDPEVFFNATGCLRKRLGMRELLALVPQRATSSRVNLSSADAGRQTMRNYSGLIDSLMAYVQNCVAASRCDDKSVENCMCVLHNLSYRLDAEVPTRYRQLEYNARNAYTEKSSTGCFSNKSDKMMNNNYDCPLPEEETNPKGSGWLYHSDAIRTYLNLMGKSKKDATLEACAGALQNLTASKGLMSSGMSQLIGLKEKGLPQIARLLQSGNSDVVRSGASLLSNMSRHPLLHRVMGNQVFPEVTRLLTSHTGNTSNSEDILSSACYTVRNLMASQPQLAKQYFSSSMLNNIINLCRSSASPKAAEAARLLLSDMWSSKELQGVLRQQGFDRNMLGTLAGANSLRNFTSRF.

Residues 1–234 form a required for binding to single stranded DNA region; it reads MNHSPLKTAL…SFGHSRASSK (234 aa). Residues 1 to 286 form a required for interaction with EIF4A1 region; that stretch reads MNHSPLKTAL…ESAKQQVYQL (286 aa). Position 4 is a phosphoserine (S4). The disordered stretch occupies residues 48-68; that stretch reads TVKRQKSKSSQSSTLSHSNRG. Phosphorylation in this region is required for cytoplasmic localization and protein stabilization stretches follow at residues 54–69 and 116–191; these read SKSS…NRGS and RFSS…STCS. A Phosphoserine; by PKB/AKT2 modification is found at S118. 3 positions are modified to phosphoserine: S119, S121, and S142. The segment at 160–269 is required for WNT-mediated nuclear localization; it reads YCDPRGTLRK…KYQAIGAYYI (110 aa). ARM repeat units follow at residues 243–274, 275–316, 317–359, 360–415, 416–463, 525–556, 557–603, 604–649, and 650–713; these read SGLT…HTCF, QDES…NLVF, RSTT…NLSS, TDEL…KRLG, MREL…NCVA, NYDC…LNLM, GKSK…IARL, LQSG…SHTG, and NTSN…DMWS.

It belongs to the beta-catenin family. As to quaternary structure, part of a complex that contains DSG3, PKP1, YAP1 and YWHAG; the complex is required for localization of DSG3 and YAP1 to the cell membrane in keratinocytes. Interacts with DSP. Interacts (via N-terminus) with KRT5/CK5, KRT8/CK8 (via rod domain), KRT15/CK15 and KRT18/CK18 (via rod domain) as part of intermediate filaments. Interacts with VIM (via rod domain). Interacts with DSP. Interacts with DES. Interacts with FXR1; the interaction may facilitate the binding of PKP1 to PKP2, PKP3 and DSP mRNA. Interacts (via N-terminus) with EIF4A1; the interaction promotes EIF4A1 recruitment to the cap-dependent translation complex and EIF4A1 ATPase activity. Interacts with TJP1/ZO-1; the interaction facilitates TJP1/ZO-1 localization to the plasma membrane. Interacts (when phosphorylated) with YWHAG; the interaction results in translocation of PKP1 to the cytoplasm and loss of intercellular adhesion in keratinocytes. Post-translationally, phosphorylated by AKT2; required for interaction with YWHAG and subsequent localization away from desmosomes to the cytoplasm. Phosphorylation of Ser-118 by AKT2 promotes PKP1-driven cap-dependent mRNA translation and decreases intercellular adhesion, phosphorylation is promoted by insulin. Phosphorylation by RIPK4 at the N-terminus is required for its role in differentiation of keratinocytes and DSG1 localization at cell junctions. As to expression, expressed in stratified squamous, complex, glandular duct and bladder epithelia (at protein level). In terms of tissue distribution, widely expressed (at protein level).

It localises to the cell junction. The protein resides in the desmosome. Its subcellular location is the nucleus. The protein localises to the cytoplasm. It is found in the perinuclear region. It localises to the cell membrane. The protein resides in the stress granule. Functionally, a component of desmosome cell-cell junctions which are required for positive regulation of cellular adhesion. Plays a role in desmosome protein expression regulation and localization to the desmosomal plaque, thereby maintaining cell sheet integrity and anchorage of desmosomes to intermediate filaments. Required for localization of DSG3 and YAP1 to the cell membrane in keratinocytes in response to mechanical strain, via the formation of an interaction complex composed of DSG3, YAP1, PKP1 and YWHAG. Positively regulates differentiation of keratinocytes, potentially via promoting localization of DSG1 at desmosome cell junctions. Required for calcium-independent development and maturation of desmosome plaques specifically at lateral cell-cell contacts in differentiating keratinocytes. Plays a role in the maintenance of DSG3 protein abundance, DSG3 clustering and localization of these clusters to the cell membrane in keratinocytes. May also promote keratinocyte proliferation and morphogenesis during postnatal development. Required for tight junction inside-out transepidermal barrier function of the skin. Promotes Wnt-mediated proliferation and differentiation of ameloblasts, via facilitating TJP1/ZO-1 localization to tight junctions. Binds single-stranded DNA (ssDNA), and may thereby play a role in sensing DNA damage and promoting cell survival. Positively regulates cap-dependent translation and as a result cell proliferation, via recruitment of EIF4A1 to the initiation complex and promotion of EIF4A1 ATPase activity. Regulates the mRNA stability and protein abundance of desmosome components PKP2, PKP3, DSC2 and DSP, potentially via its interaction with FXR1. The chain is Plakophilin-1 (PKP1) from Homo sapiens (Human).